We begin with the raw amino-acid sequence, 481 residues long: Glutamate--tRNA ligase (481 aa).

Positions Pro28 to Gly38 match the 'HIGH' region motif. Residues Arg139–Pro148 show a composition bias toward basic and acidic residues. A disordered region spans residues Arg139–Arg159. The short motif at Lys260–Arg264 is the 'KMSKS' region element. Residue Lys263 coordinates ATP.

Belongs to the class-I aminoacyl-tRNA synthetase family. Glutamate--tRNA ligase type 1 subfamily. In terms of assembly, monomer.

It is found in the cytoplasm. The catalysed reaction is tRNA(Glu) + L-glutamate + ATP = L-glutamyl-tRNA(Glu) + AMP + diphosphate. In terms of biological role, catalyzes the attachment of glutamate to tRNA(Glu) in a two-step reaction: glutamate is first activated by ATP to form Glu-AMP and then transferred to the acceptor end of tRNA(Glu). This Bordetella bronchiseptica (strain ATCC BAA-588 / NCTC 13252 / RB50) (Alcaligenes bronchisepticus) protein is Glutamate--tRNA ligase.